A 215-amino-acid chain; its full sequence is Large ribosomal subunit protein uL4 (215 aa).

Residues 51 to 88 (KGMGEVSGTTKKPYRQKGTGNARQGSLRAPQFRTGGAV) are disordered.

Belongs to the universal ribosomal protein uL4 family. In terms of assembly, part of the 50S ribosomal subunit.

One of the primary rRNA binding proteins, this protein initially binds near the 5'-end of the 23S rRNA. It is important during the early stages of 50S assembly. It makes multiple contacts with different domains of the 23S rRNA in the assembled 50S subunit and ribosome. Its function is as follows. Forms part of the polypeptide exit tunnel. This is Large ribosomal subunit protein uL4 from Granulibacter bethesdensis (strain ATCC BAA-1260 / CGDNIH1).